The primary structure comprises 155 residues: Ribosomal RNA large subunit methyltransferase H (155 aa).

S-adenosyl-L-methionine-binding positions include Leu-72, Gly-103, and 122-127; that span reads LSPLTL.

It belongs to the RNA methyltransferase RlmH family. As to quaternary structure, homodimer.

Its subcellular location is the cytoplasm. It catalyses the reaction pseudouridine(1915) in 23S rRNA + S-adenosyl-L-methionine = N(3)-methylpseudouridine(1915) in 23S rRNA + S-adenosyl-L-homocysteine + H(+). Specifically methylates the pseudouridine at position 1915 (m3Psi1915) in 23S rRNA. The sequence is that of Ribosomal RNA large subunit methyltransferase H from Haemophilus influenzae (strain PittGG).